An 83-amino-acid chain; its full sequence is MKTLLLTLVVVTIVCLDLGYTRRCFNHPSSQPQTNKSCPPGENSCYNKQWRDHRGTITERGCGCPTVKPGIKLTCCQSEDCNN.

The signal sequence occupies residues 1–21 (MKTLLLTLVVVTIVCLDLGYT). 4 cysteine pairs are disulfide-bonded: Cys24/Cys45, Cys38/Cys62, Cys64/Cys75, and Cys76/Cys81.

It belongs to the three-finger toxin family. Short-chain subfamily. Type I alpha-neurotoxin sub-subfamily. As to expression, expressed by the venom gland.

Its subcellular location is the secreted. Its function is as follows. Binds to muscle nicotinic acetylcholine receptor (nAChR) and inhibit acetylcholine from binding to the receptor, thereby impairing neuromuscular transmission. The chain is Short neurotoxin OKI-01/OKI-19 from Laticauda laticaudata (Blue-ringed sea krait).